The sequence spans 1460 residues: Ankyrin repeat-containing protein kinase A (1460 aa).

Disordered regions lie at residues Met1–Ile32, Ile57–His181, Arg216–Thr259, Ser272–Asp311, Ser329–Ser354, Phe374–Pro510, and Cys551–Pro608. Composition is skewed to low complexity over residues Ser8–Ile32, Ser61–His86, and Ser111–Asn128. Residues Gln129–Asn140 show a composition bias toward polar residues. Residues Lys149 to Lys162 show a composition bias toward basic and acidic residues. Low complexity-rich tracts occupy residues Asn220 to Thr259 and Ser272 to Ser300. 2 stretches are compositionally biased toward polar residues: residues Ser329–Pro345 and Pro384–Pro404. Over residues Ser405–Ser422 the composition is skewed to low complexity. Polar residues predominate over residues Gly423–Ile434. Residues Ser435 to Gln461 show a composition bias toward low complexity. Positions His462 to Ser472 are enriched in basic residues. Residues His467–Asp667 are interaction with 14-3-3 protein. Low complexity predominate over residues Pro486 to Ser497. A Phorbol-ester/DAG-type zinc finger spans residues Thr499–Cys551. Positions Ser559–Gln568 are enriched in polar residues. Positions Ser569–Pro608 are enriched in low complexity. The region spanning Arg653–Ser724 is the GRAM domain. ANK repeat units lie at residues Ser814–Ser843, Lys852–Glu883, Asp887–Glu920, Asn924–Ile955, and Ala959–Ile988. The Protein kinase domain occupies Leu1112 to Val1375. ATP is bound by residues Ile1118–Val1126 and Lys1139. Asp1231 serves as the catalytic Proton acceptor. The chain crosses the membrane as a helical span at residues Met1293–Tyr1313. Residues Pro1425–Asn1460 are a coiled coil. Residues Ala1434 to Asn1460 form a disordered region.

This sequence belongs to the protein kinase superfamily. TKL Ser/Thr protein kinase family.

The protein resides in the cytoplasm. Its subcellular location is the cytoskeleton. It localises to the membrane. It is found in the nucleus. It carries out the reaction L-seryl-[protein] + ATP = O-phospho-L-seryl-[protein] + ADP + H(+). It catalyses the reaction L-threonyl-[protein] + ATP = O-phospho-L-threonyl-[protein] + ADP + H(+). In terms of biological role, involved in the development of the fruiting body. Overexpression phenocopies the spnA null phenotype. This is Ankyrin repeat-containing protein kinase A (arkA) from Dictyostelium discoideum (Social amoeba).